We begin with the raw amino-acid sequence, 572 residues long: Proline--tRNA ligase (572 aa).

Belongs to the class-II aminoacyl-tRNA synthetase family. ProS type 1 subfamily. In terms of assembly, homodimer.

The protein resides in the cytoplasm. It carries out the reaction tRNA(Pro) + L-proline + ATP = L-prolyl-tRNA(Pro) + AMP + diphosphate. Functionally, catalyzes the attachment of proline to tRNA(Pro) in a two-step reaction: proline is first activated by ATP to form Pro-AMP and then transferred to the acceptor end of tRNA(Pro). As ProRS can inadvertently accommodate and process non-cognate amino acids such as alanine and cysteine, to avoid such errors it has two additional distinct editing activities against alanine. One activity is designated as 'pretransfer' editing and involves the tRNA(Pro)-independent hydrolysis of activated Ala-AMP. The other activity is designated 'posttransfer' editing and involves deacylation of mischarged Ala-tRNA(Pro). The misacylated Cys-tRNA(Pro) is not edited by ProRS. This Salmonella dublin (strain CT_02021853) protein is Proline--tRNA ligase.